A 521-amino-acid polypeptide reads, in one-letter code: Vascular endothelial zinc finger 1 (521 aa).

Residues 74–96 form a C2H2-type 1 zinc finger; the sequence is FVCTYCSKAFRDSYHLRRHESCH. Low complexity predominate over residues 140–155; the sequence is TTSSSGTNPSSSASTT. Residues 140–167 are disordered; that stretch reads TTSSSGTNPSSSASTTAMPVTQSVKKPS. C2H2-type zinc fingers lie at residues 174–196, 202–224, 232–255, 261–283, and 287–308; these read HACE…KLSH, FECP…VRSH, YTCS…KHVH, FKCQ…MVRH, and VSCN…LKTH. K362 carries the post-translational modification N6-acetyllysine. Tandem repeats lie at residues 394 to 400, 445 to 451, 457 to 463, and 479 to 485. The tract at residues 394 to 485 is 4 X 7 AA repeats of P-[LV]-T-[IL]-T-[ST]-P; that stretch reads PVTLTTPFSI…IAHPVTITSP (92 aa).

It belongs to the krueppel C2H2-type zinc-finger protein family. In terms of assembly, interacts with ARHGAP22. Ubiquitously expressed. Highest levels in skeletal muscle and kidney.

The protein resides in the nucleus. Functionally, possible transcription factor. Specifically binds to the CT/GC-rich region of the interleukin-3 promoter and mediates tax transactivation of IL-3. In Homo sapiens (Human), this protein is Vascular endothelial zinc finger 1 (VEZF1).